The sequence spans 634 residues: RING finger protein 207 (634 aa).

The RING-type zinc finger occupies 25–63 (CHLCQEQYEHPCLLDCYHTFCASCLRGRVADSRLTCPVC). A B box-type; atypical zinc finger spans residues 93–145 (EETVQCANCDLECKKQDVDAMYYCNTCCQPLCRDCRETTHKAKMFSRHEIVSL). Cysteine 98, cysteine 101, cysteine 127, and histidine 132 together coordinate Zn(2+). The tract at residues 575-634 (YEDSTSTADTQPSNELSCNTEDNWTLNSLSEETNPKNKDYYRTNKQKNTTDSTNRKEIPM) is disordered. Over residues 577–606 (DSTSTADTQPSNELSCNTEDNWTLNSLSEE) the composition is skewed to polar residues. A compositionally biased stretch (basic and acidic residues) spans 607 to 616 (TNPKNKDYYR).

The protein localises to the cytoplasm. In terms of biological role, plays a role in cardiac repolarization possibly by stabilizing membrane expression of the potassium channel kcnh6a/zerg, or by assisting its synthesis, folding or export from the endoplasmic reticulum, in a heat shock protein-dependent manner. The polypeptide is RING finger protein 207 (rnf207b) (Danio rerio (Zebrafish)).